Consider the following 250-residue polypeptide: MSGFRNRIQSWGKGLGTVLSDSIGDESSEKTSRSIQHNHYEEDDALPPVHLIGYSEKTKNRLLSKEMCEELRQLMPTRIQLYTEWTLLYSLEQHGASLHSLYDKLKYDTNNNARVGYVIVIRDRKGGIFGGYANETFHPTDSRRYYGNGECFLWKMEKVPDLQLHDKHDCKQDSHNWQLRGFPYTGENEFSIYCTSTFLSMGAGDGHYGLWIDDGLFRGVTFPSMTFGNDILSREGSKFHIVGVEVWRVG.

In terms of domain architecture, TLDc spans 61–250; that stretch reads RLLSKEMCEE…IVGVEVWRVG (190 aa).

The protein belongs to the OXR1 family.

It is found in the mitochondrion. Its function is as follows. May be involved in protection from oxidative damage. This is Oxidation resistance protein 1 (OXR1) from Kluyveromyces lactis (strain ATCC 8585 / CBS 2359 / DSM 70799 / NBRC 1267 / NRRL Y-1140 / WM37) (Yeast).